The following is a 289-amino-acid chain: D-alanine aminotransferase (289 aa).

Tyr-31 contacts substrate. A pyridoxal 5'-phosphate-binding site is contributed by Arg-50. Arg-99 and His-101 together coordinate substrate. Lys-147 acts as the Proton acceptor in catalysis. Lys-147 carries the N6-(pyridoxal phosphate)lysine modification. Glu-179 lines the pyridoxal 5'-phosphate pocket.

This sequence belongs to the class-IV pyridoxal-phosphate-dependent aminotransferase family. Homodimer. It depends on pyridoxal 5'-phosphate as a cofactor.

The enzyme catalyses D-alanine + 2-oxoglutarate = D-glutamate + pyruvate. Functionally, acts on the D-isomers of alanine, leucine, aspartate, glutamate, aminobutyrate, norvaline and asparagine. The enzyme transfers an amino group from a substrate D-amino acid to the pyridoxal phosphate cofactor to form pyridoxamine and an alpha-keto acid in the first half-reaction. The second half-reaction is the reverse of the first, transferring the amino group from the pyridoxamine to a second alpha-keto acid to form the product D-amino acid via a ping-pong mechanism. This is an important process in the formation of D-alanine and D-glutamate, which are essential bacterial cell wall components. This is D-alanine aminotransferase (dat) from Listeria innocua serovar 6a (strain ATCC BAA-680 / CLIP 11262).